The primary structure comprises 101 residues: Ferredoxin-3 (101 aa).

4Fe-4S ferredoxin-type domains are found at residues 17–46 (YLMK…LHGL) and 70–100 (KVMA…HAAL). Positions 26, 29, 32, 36, 80, 83, 86, and 90 each coordinate [4Fe-4S] cluster.

In terms of assembly, homodimer. The cofactor is [4Fe-4S] cluster.

In terms of biological role, ferredoxins are iron-sulfur proteins that transfer electrons in a wide variety of metabolic reactions. The polypeptide is Ferredoxin-3 (fdxB) (Rhodobacter capsulatus (Rhodopseudomonas capsulata)).